Consider the following 420-residue polypeptide: Tyrosine--tRNA ligase (420 aa).

Position 38 (Y38) interacts with L-tyrosine. The short motif at 43 to 52 (PTGDSLHIGH) is the 'HIGH' region element. Positions 169 and 173 each coordinate L-tyrosine. The 'KMSKS' region signature appears at 231 to 235 (KFGKS). Residue K234 participates in ATP binding. The 67-residue stretch at 353–419 (KNIVEFLVET…GKRKYTLVKI (67 aa)) folds into the S4 RNA-binding domain.

The protein belongs to the class-I aminoacyl-tRNA synthetase family. TyrS type 1 subfamily. Homodimer.

The protein resides in the cytoplasm. The enzyme catalyses tRNA(Tyr) + L-tyrosine + ATP = L-tyrosyl-tRNA(Tyr) + AMP + diphosphate + H(+). Functionally, catalyzes the attachment of tyrosine to tRNA(Tyr) in a two-step reaction: tyrosine is first activated by ATP to form Tyr-AMP and then transferred to the acceptor end of tRNA(Tyr). In Lactobacillus johnsonii (strain CNCM I-12250 / La1 / NCC 533), this protein is Tyrosine--tRNA ligase.